The primary structure comprises 669 residues: Diacylglycerol lipase-beta (669 aa).

Over 1 to 17 (MPGMVLFGRRWSLASDD) the chain is Cytoplasmic. Residues 18–38 (LVFPGSFELFLRVLWWIVSLT) form a helical membrane-spanning segment. Residues 39–58 (LYLTHRRRLDCPGGVLLSTY) are Extracellular-facing. The helical transmembrane segment at 59-79 (LIVLLVLLAVIICTVLAIVCV) threads the bilayer. Residues 80–102 (SMRGTICNPGPRKSMSKLLYIRL) are Cytoplasmic-facing. A helical membrane pass occupies residues 103-123 (ALFLPEMVWASLGAAWVAKGI). At 124 to 128 (QCDRT) the chain is on the extracellular side. The helical transmembrane segment at 129–149 (VVIGIIATVIVSWIVIAATMV) threads the bilayer. At 150–669 (TIIFVFDPLG…CPGQGGSSVP (520 aa)) the chain is on the cytoplasmic side. Residues S443 and D495 each act as charge relay system in the active site. S570, S578, and S582 each carry phosphoserine.

It belongs to the AB hydrolase superfamily. Lipase family. The cofactor is Ca(2+). Expressed in liver and immune cells such as macrophages and microglias. In embryonic brains present in axonal tracts, while in adults localizes to dendritic fields, correlating with the developmental change in requirement for 2-AG synthesis from the pre- to the postsynaptic compartment (at protein level).

It localises to the cell membrane. The enzyme catalyses a 1,2-diacyl-sn-glycerol + H2O = a 2-acylglycerol + a fatty acid + H(+). It carries out the reaction 1-octadecanoyl-2-(5Z,8Z,11Z,14Z-eicosatetraenoyl)-sn-glycerol + H2O = 2-(5Z,8Z,11Z,14Z-eicosatetraenoyl)-glycerol + octadecanoate + H(+). It catalyses the reaction 1,2-di-(9Z-octadecenoyl)-sn-glycerol + H2O = 2-(9Z-octadecenoyl)-glycerol + (9Z)-octadecenoate + H(+). The catalysed reaction is 1-(9Z-octadecenoyl)-2-(5Z,8Z,11Z,14Z-eicosatetraenoyl)-sn-glycerol + H2O = 2-(5Z,8Z,11Z,14Z-eicosatetraenoyl)-glycerol + (9Z)-octadecenoate + H(+). The enzyme catalyses 1-(9Z-octadecenoyl)-2-octadecanoyl-sn-glycerol + H2O = 2-octadecanoylglycerol + (9Z)-octadecenoate + H(+). It carries out the reaction 1-(9Z-octadecenoyl)-2-(9Z,12Z-octadecadienoyl)-sn-glycerol + H2O = 2-(9Z,12Z-octadecadienoyl)-glycerol + (9Z)-octadecenoate + H(+). It catalyses the reaction 1-(9Z-octadecenoyl)-2-O-(5Z,8Z,11Z,14Z-eicosatetraenyl)-sn-glycerol + H2O = 2-O-(5Z,8Z,11Z,14Z)-eicosatetraenylglycerol + (9Z)-octadecenoate + H(+). The catalysed reaction is a triacylglycerol + H2O = a diacylglycerol + a fatty acid + H(+). The enzyme catalyses 1,2,3-tri-(5Z,8Z,11Z,14Z-eicosatetraenoyl)-glycerol + H2O = 1,2-di-(5Z,8Z,11Z,14Z-eicosatetraenoyl)-glycerol + (5Z,8Z,11Z,14Z)-eicosatetraenoate + H(+). It carries out the reaction 1,2,3-(4Z,7Z,10Z,13Z,16Z,19Z-docosahexaenoyl)-glycerol + H2O = 1,2-di-(4Z,7Z,10Z,13Z,16Z,19Z-docosahexaenoyl)-glycerol + (4Z,7Z,10Z,13Z,16Z,19Z)-docosahexaenoate + H(+). With respect to regulation, inhibited by the 1,2,3-triazole urea covalent inhibitors KT109 and KT172. Inhibited by p-hydroxy-mercuri-benzoate and HgCl(2), but not by PMSF. Also inhibited by RHC80267, a drug that blocks 2-AG formation. Its function is as follows. Lipase that catalyzes the hydrolysis of arachidonic acid (AA)-esterified diacylglycerols (DAGs) to produce the principal endocannabinoid, 2-arachidonoylglycerol (2-AG) which can be further cleaved by downstream enzymes to release arachidonic acid (AA) for cyclooxygenase (COX)-mediated eicosanoid production. Preferentially hydrolyzes DAGs at the sn-1 position in a calcium-dependent manner and has negligible activity against other lipids including monoacylglycerols and phospholipids. Plays a key role in the regulation of 2-AG and AA pools utilized by COX1/2 to generate lipid mediators of macrophage and microglia inflammatory responses. Also functions as a polyunsaturated fatty acids-specific triacylglycerol lipase in macrophages. Plays an important role to support the metabolic and signaling demands of macrophages. The sequence is that of Diacylglycerol lipase-beta (Daglb) from Mus musculus (Mouse).